The chain runs to 215 residues: Pyrrolidone-carboxylate peptidase (215 aa).

Catalysis depends on residues Glu-80, Cys-143, and His-167.

Belongs to the peptidase C15 family. In terms of assembly, homotetramer.

The protein localises to the cytoplasm. It carries out the reaction Release of an N-terminal pyroglutamyl group from a polypeptide, the second amino acid generally not being Pro.. Removes 5-oxoproline from various penultimate amino acid residues except L-proline. This chain is Pyrrolidone-carboxylate peptidase, found in Bacillus cytotoxicus (strain DSM 22905 / CIP 110041 / 391-98 / NVH 391-98).